The primary structure comprises 367 residues: Biotin synthase (367 aa).

The 236-residue stretch at 73 to 308 (CCGNTVDLCS…EQIIRYAGGR (236 aa)) folds into the Radical SAM core domain. Residues Cys-91, Cys-95, and Cys-98 each contribute to the [4Fe-4S] cluster site. 4 residues coordinate [2Fe-2S] cluster: Cys-136, Cys-173, Cys-233, and Arg-303.

It belongs to the radical SAM superfamily. Biotin synthase family. Homodimer. Requires [4Fe-4S] cluster as cofactor. It depends on [2Fe-2S] cluster as a cofactor.

The catalysed reaction is (4R,5S)-dethiobiotin + (sulfur carrier)-SH + 2 reduced [2Fe-2S]-[ferredoxin] + 2 S-adenosyl-L-methionine = (sulfur carrier)-H + biotin + 2 5'-deoxyadenosine + 2 L-methionine + 2 oxidized [2Fe-2S]-[ferredoxin]. It participates in cofactor biosynthesis; biotin biosynthesis; biotin from 7,8-diaminononanoate: step 2/2. Its function is as follows. Catalyzes the conversion of dethiobiotin (DTB) to biotin by the insertion of a sulfur atom into dethiobiotin via a radical-based mechanism. This chain is Biotin synthase, found in Picosynechococcus sp. (strain ATCC 27264 / PCC 7002 / PR-6) (Agmenellum quadruplicatum).